Reading from the N-terminus, the 264-residue chain is MPFTFKLFHVDDSRCGMPVSTDGVLLGAWAPLVQAKTILDIGAGSGLLSLMAAQRSLAKITAIEVDTDAALDCQQNFNASPWFDRLEVICCDIQAYAQAHTQVHSQAHNHAEQSKQFEHIICNPPYFANGPQSSNVSRATARHTDSLSFDSLLAAIKQLLSPEGCASLILPTESVSLFETKLSTYQLELSQKLLAASVEGKEANRQILVLRHTSALAHDPKTETEPAVVAKLEDAAQQQLYIREKNGQYSQAFSLLSRDFYLKL.

This sequence belongs to the methyltransferase superfamily. tRNA (adenine-N(6)-)-methyltransferase family.

The protein resides in the cytoplasm. The catalysed reaction is adenosine(37) in tRNA1(Val) + S-adenosyl-L-methionine = N(6)-methyladenosine(37) in tRNA1(Val) + S-adenosyl-L-homocysteine + H(+). In terms of biological role, specifically methylates the adenine in position 37 of tRNA(1)(Val) (anticodon cmo5UAC). This is tRNA1(Val) (adenine(37)-N6)-methyltransferase from Shewanella pealeana (strain ATCC 700345 / ANG-SQ1).